We begin with the raw amino-acid sequence, 72 residues long: N-alpha-acetyltransferase 38, NatC auxiliary subunit (72 aa).

A Sm domain is found at N3–A72.

As to quaternary structure, component of the N-terminal acetyltransferase C (NatC) complex, composed of the catalytic subunit Naa30, a large auxiliary subunit Naa35 and a small auxiliary subunit Naa38.

It localises to the endoplasmic reticulum. Functionally, component of the NatC N-terminal acetyltransferase, which associates with the ribosome to acetylate nascent protein chains in a cotranslational manner. NatC acetylates protein N-termini starting with methionine, followed by a hydrophobic or amphipathic amino acid, with amino acids at positions 3 and 4 also contributing to NatC recognition. The first 4 amino acids of cognate substrates are recognized at the Naa30-Naa35 interface. NatC-dependent acetylation targets various substrate proteins to specific subcellular sites. The polypeptide is N-alpha-acetyltransferase 38, NatC auxiliary subunit (naa38) (Schizosaccharomyces pombe (strain 972 / ATCC 24843) (Fission yeast)).